A 283-amino-acid chain; its full sequence is Tyrosine recombinase THA_404 (283 aa).

The 86-residue stretch at 1-86 folds into the Core-binding (CB) domain; sequence MDKVIEMFSD…SLNSFFNYLE (86 aa). Residues 107–281 form the Tyr recombinase domain; that stretch reads KIPDFLTEDE…ADQEKFDAVK (175 aa). Catalysis depends on residues arginine 145, lysine 170, histidine 233, arginine 236, and histidine 259. Tyrosine 268 functions as the O-(3'-phospho-DNA)-tyrosine intermediate in the catalytic mechanism.

This sequence belongs to the 'phage' integrase family.

The protein localises to the cytoplasm. Functionally, site-specific tyrosine recombinase, which acts by catalyzing the cutting and rejoining of the recombining DNA molecules. The protein is Tyrosine recombinase THA_404 of Thermosipho africanus (strain TCF52B).